Consider the following 702-residue polypeptide: Protein sepa-1 (702 aa).

A required for self-association and interaction with pgl-3 region spans residues 39–160 (RQRFCYEKTD…KESTSYGQFR (122 aa)). 3 short sequence motifs (LIR) span residues 107–110 (FVEV), 247–250 (FQKI), and 298–301 (FGFV). Residues 450 to 471 (AKDPEEPTTAASEGGNTYGYQE) form a disordered region. Polar residues predominate over residues 458–468 (TAASEGGNTYG). Positions 469–472 (YQEL) match the LIR 4 motif. Residues 508–543 (AAMDKKKKRRELKSRLNKINAQIDELEKRRMERAGK) are a coiled coil. Residues 545–564 (QVVSSSVPSEEAAQVEAPAS) are disordered. The 78-residue stretch at 597–674 (NTSKEWIVED…TVDQILKKTL (78 aa)) folds into the KIX domain. A compositionally biased stretch (basic and acidic residues) spans 675–685 (KKDQRATEHNH). The segment at 675–702 (KKDQRATEHNHQQPTQSSDELAKNHEKN) is disordered.

Self-associates. Interacts (via the LIR motifs) with lgg-1; the interaction is direct. Interacts (via the LIR motifs) with lgg-2; the interaction is direct. Interacts with pgl-3; interaction is enhanced in the presence of RNA. Interacts with epg-2; may be modulated by prmt-1. Post-translationally, degraded by autophagy.

The protein resides in the nucleus. It is found in the cytoplasm. The protein localises to the cytoplasmic granule. Adapter protein that connects P-granules in somatic cells with the autophagic machinery. Association with other adapters such as epg-2 and P-granule components such as pgl-3 is required for the accumulation and degradation of P-granules by autophagy in somatic cells. This ensures exclusive localization of the P-granules in germ cells. The protein is Protein sepa-1 of Caenorhabditis elegans.